A 281-amino-acid chain; its full sequence is Cardosin-F (281 aa).

The Peptidase A1 domain maps to 18–278 (YYGEIGIGTP…DYGNLLVGFA (261 aa)). Asp-36 is a catalytic residue. An intrachain disulfide couples Cys-181 to Cys-185. Asp-190 is an active-site residue. Asn-213 carries an N-linked (GlcNAc...) asparagine glycan.

This sequence belongs to the peptidase A1 family. Heterodimer of a light chain and a heavy chain. An intermediate form is produced first, and undergoes proteolytic processing to remove the internal plant-specific insert (PSI) and the propeptide. N-glycosylated. Pistils.

It is found in the microsome membrane. Its subcellular location is the protein storage vacuole. The protein localises to the secreted. It localises to the cell wall. The protein resides in the extracellular space. It is found in the extracellular matrix. Inhibited by pepstatin. Aspartic protease with a high preference for bonds between hydrophobic residues. The polypeptide is Cardosin-F (Cynara cardunculus (Cardoon)).